The primary structure comprises 636 residues: Nucleolin 2 (636 aa).

Disordered stretches follow at residues 1–386 (MGKS…SKTL), 458–481 (ANERGTPRNSNPGRKGEGSQSRTI), and 544–636 (SEIG…NDEE). 2 stretches are compositionally biased toward basic and acidic residues: residues 43-63 (KELIDVVQKEKAEKTVPKKVE) and 76-89 (EKTKETPSKLKDES). The segment covering 90 to 103 (SSEEEDDSSSDEEI) has biased composition (acidic residues). Residues 104-118 (APAKKRPEPIKKAKV) are compositionally biased toward basic and acidic residues. Acidic residues-rich tracts occupy residues 122–133 (SSDDDSTSDEET), 152–163 (SSDDDSSSDEET), and 182–193 (SSDDDSSSDEET). The span at 224–238 (TPAKKEPIVVKKDSS) shows a compositional bias: basic and acidic residues. Composition is skewed to acidic residues over residues 267–278 (SSEEESSSDDEP), 299–311 (SSEEDSDEEESDD), and 331–341 (SSDESSDESDK). Positions 342-367 (EESKDEKVTPKKKDSDVEMVDAEQKS) are enriched in basic and acidic residues. The span at 368 to 383 (NAKQPKTPTNQTQGGS) shows a compositional bias: polar residues. RRM domains are found at residues 384–460 (KTLF…LANE) and 479–558 (RTIY…ESRP). Residues 464-481 (PRNSNPGRKGEGSQSRTI) show a composition bias toward polar residues. Composition is skewed to basic and acidic residues over residues 552-566 (HVEESRPRDSDEGRS) and 579-604 (RHSDRAPRGGRFSDRAPRGRHSDRGA). Polar residues predominate over residues 622-636 (MESSKGTKTVFNDEE).

Interacts with THAL in the nucleus. As to expression, expressed at low levels in flower buds.

The protein localises to the nucleus. Its subcellular location is the nucleolus. In terms of biological role, involved in pre-rRNA processing and ribosome assembly. The polypeptide is Nucleolin 2 (Arabidopsis thaliana (Mouse-ear cress)).